A 155-amino-acid polypeptide reads, in one-letter code: 3-dehydroquinate dehydratase 1 (155 aa).

Tyr-28 functions as the Proton acceptor in the catalytic mechanism. 3 residues coordinate substrate: Asn-80, His-86, and Asp-93. His-106 (proton donor) is an active-site residue. Residues 107–108 and Arg-117 contribute to the substrate site; that span reads VT.

This sequence belongs to the type-II 3-dehydroquinase family. As to quaternary structure, homododecamer.

It carries out the reaction 3-dehydroquinate = 3-dehydroshikimate + H2O. It functions in the pathway metabolic intermediate biosynthesis; chorismate biosynthesis; chorismate from D-erythrose 4-phosphate and phosphoenolpyruvate: step 3/7. Functionally, catalyzes a trans-dehydration via an enolate intermediate. The chain is 3-dehydroquinate dehydratase 1 (aroQ1) from Bradyrhizobium diazoefficiens (strain JCM 10833 / BCRC 13528 / IAM 13628 / NBRC 14792 / USDA 110).